Here is a 93-residue protein sequence, read N- to C-terminus: Acylphosphatase (93 aa).

Residues 5-93 (CIIAWVHGRV…EELTGFRIRY (89 aa)) enclose the Acylphosphatase-like domain. Catalysis depends on residues R20 and N38.

The protein belongs to the acylphosphatase family.

It catalyses the reaction an acyl phosphate + H2O = a carboxylate + phosphate + H(+). This chain is Acylphosphatase (acyP), found in Citrobacter koseri (strain ATCC BAA-895 / CDC 4225-83 / SGSC4696).